The sequence spans 465 residues: Tapasin (465 aa).

The N-terminal stretch at 1–23 (MKPLLLLVAVALGLATVVSVVSA) is a signal peptide. The Lumenal portion of the chain corresponds to 24-416 (GPEAIECWFV…GFSGPSIEDG (393 aa)). A disulfide bridge connects residues Cys-30 and Cys-94. Asn-256 carries an N-linked (GlcNAc...) asparagine glycan. Residues 295 to 402 (PRVSLTPAPV…PASGRSADVT (108 aa)) enclose the Ig-like C1-type domain. A disulfide bond links Cys-318 and Cys-385. Residues 417-437 (IGLFLSAFLLLGLLKVLGWLA) form a helical membrane-spanning segment. Residues 438 to 465 (AYWTIPEVSKEKATAASLTIPRNSKKSQ) lie on the Cytoplasmic side of the membrane.

Heterodimer with PDIA3; disulfide-linked. Obligatory mediator for the interaction between newly assembled MHC class I molecules, calreticulin, PDIA3 and TAP. Up to 4 MHC class I/tapasin complexes bind to 1 TAP. Interacts with HLA-G-B2M complex; this interaction is required for loading of high affinity peptides. On its own or as part of MHC class I peptide loading complex, interacts with ligand-free MR1 or MR1-B2M complex, providing for stable MR1 pools ready for metabolite antigen processing.

The protein localises to the endoplasmic reticulum membrane. In terms of biological role, involved in the association of MHC class I with transporter associated with antigen processing (TAP) and in the assembly of MHC class I with peptide (peptide loading). This is Tapasin (Tapbp) from Mus musculus (Mouse).